Reading from the N-terminus, the 518-residue chain is MTSTTQVLIALSSIVVAYFVKTALAKRKLNPRGLPYPPGPKGLPVIGNLTQLPQHKPWLVYKEWGRTYGDLMYLEAMGQPMIIINSLSRALDLLDKRAVNYSDRPHVPTMDLCVLMKLDWVFAFMQYGADWRNHRRAFHQYLNHNMVHNYHPIQEQETQEFLRALIARPKDFLAHTRHLFGSIIIRISYGFEDEEYNKVLVEEAEALASGFSESIIPGRYLVNAFPFLRHVPSWLPGAGFQRTMQYLRKISEKTLSEPFDNVKEALKTGNRQVGPSLAVGLIESLPDETHANRTSLEVVARNTSALSYIAGADTTVSSAQALILALAMHPEVQRKAQKEIDSVVGTDRLPNMSDKPNMPYVQAIVKEAGRWHTVLPLGFIHVSAKEDEYDGYFIPKGSFIFVNTWAIMHDPDVFKNPLQFNPERYLKNGQIDTSVLDPEAATFGFGRRICPGRWLSNDSLFLMAASLLATFNIAAPKDRTGKPIPLSLDTSSHLITAPLPYDCEFQLRSPKYAALLQK.

The chain crosses the membrane as a helical span at residues 7-25; the sequence is VLIALSSIVVAYFVKTALA. Residues Asn48, Asn100, Asn292, Asn302, and Asn351 are each glycosylated (N-linked (GlcNAc...) asparagine). Position 450 (Cys450) interacts with heme. Asn457 is a glycosylation site (N-linked (GlcNAc...) asparagine).

This sequence belongs to the cytochrome P450 family. It depends on heme as a cofactor.

The protein resides in the membrane. The protein operates within secondary metabolite biosynthesis. Functionally, cytochrome P450 monooxygenase; part of the gene cluster that mediates the biosynthesis of alpha-cuprenene and oxidized derivatives. The alpha-cuprenene synthase COP6 is the only sesquiterpene synthase identified in C.cinereus that appears to be part of a biosynthetic gene cluster and is highly specific since it catalyzes the cyclization of (2E,6E)-farnesyl diphosphate into only one product, alpha-cuprenene. The cytochrome P450 monooxygenase COX2 then oxidizes the cyclohexadiene ring of alpha-cuprenene at positions 1 and 4, yielding first alpha-cuparene, followed by alpha-cuparophenol and a further yet unidentified compound resulting from one additional oxidation step. The cytochrome P450 monooxygenase COX1 then likely catalyzes the oxidation at position 9 of the pentane ring of alpha-cuprenene to give the corresponding hydroxy or ketone derivatives. The chain is Cytochrome P450 monooxygenase COX1 from Coprinopsis cinerea (strain Okayama-7 / 130 / ATCC MYA-4618 / FGSC 9003) (Inky cap fungus).